Reading from the N-terminus, the 488-residue chain is Probable metabolite transport protein YBR241C (488 aa).

The Cytoplasmic segment spans residues 1 to 18 (MAETERLMPNGGSRETKP). A helical transmembrane segment spans residues 19–39 (LITGHLILGTIVACLGSIQYG). Residues 40 to 87 (YHIAELNAPQEFLSCSRFEAPDENISYDDTWVGQHGLKQCIALTDSQY) are Vacuolar-facing. N-linked (GlcNAc...) asparagine glycosylation is present at N63. A helical membrane pass occupies residues 88–108 (GAITSIFSIGGLFGSYYAGNW). Residues 109–121 (ANRYGRKYVSMGA) lie on the Cytoplasmic side of the membrane. Residues 122–142 (SAMCMVSSLLLFFSNSYLQLL) form a helical membrane-spanning segment. Residues 143-146 (FGRF) are Vacuolar-facing. A helical membrane pass occupies residues 147–167 (LVGMSCGTAIVITPLFINEIA). Topologically, residues 168 to 178 (PVEWRGAMGSM) are cytoplasmic. A helical membrane pass occupies residues 179–198 (NQVSINLGILLTQTLALKYA). Residues 199 to 204 (DSYNWR) are Vacuolar-facing. A helical membrane pass occupies residues 205–225 (WLLFSGSVIAVANILAWLKVD). Residues 226–299 (ESPRWLVSHG…DPSYKKPRTV (74 aa)) are Cytoplasmic-facing. Basic and acidic residues predominate over residues 258 to 279 (EIQDWQRSHGHNRDPESSEETH). Residues 258-281 (EIQDWQRSHGHNRDPESSEETHSG) are disordered. A helical membrane pass occupies residues 300 to 320 (ILAILSCQQFCGINSIIFYGV). Over 321 to 322 (KV) the chain is Vacuolar. A helical transmembrane segment spans residues 323 to 337 (IGKILPDYSIQVNFA). The Cytoplasmic portion of the chain corresponds to 338–344 (ISILNVV). The chain crosses the membrane as a helical span at residues 345 to 364 (VTLAASAIIDHVGRRPLLLA). Residues 365-390 (STTVMTAMSLLISVGLTLSVSFLLVT) are Vacuolar-facing. A helical membrane pass occupies residues 391 to 411 (ATFVYIAAFAIGLGPIPFLII). Residues 412-419 (GELSYPQD) lie on the Cytoplasmic side of the membrane. The helical transmembrane segment at 420 to 442 (AATAQSFGTVCNWLATFIVGYLF) threads the bilayer. Over 443 to 446 (PIGH) the chain is Vacuolar. A helical membrane pass occupies residues 447 to 463 (GLMGGYVFAIFAAIAAM). Residues 464-488 (FATYVYKRVPETKGKTTYSEVWAGY) lie on the Cytoplasmic side of the membrane.

The protein belongs to the major facilitator superfamily. Sugar transporter (TC 2.A.1.1) family.

The protein localises to the vacuole membrane. The chain is Probable metabolite transport protein YBR241C from Saccharomyces cerevisiae (strain ATCC 204508 / S288c) (Baker's yeast).